The sequence spans 346 residues: Magnesium-protoporphyrin IX monomethyl ester [oxidative] cyclase (346 aa).

The protein belongs to the AcsF family. Fe cation serves as cofactor.

The enzyme catalyses Mg-protoporphyrin IX 13-monomethyl ester + 3 NADPH + 3 O2 + 2 H(+) = 3,8-divinyl protochlorophyllide a + 3 NADP(+) + 5 H2O. It participates in porphyrin-containing compound metabolism; chlorophyll biosynthesis (light-independent). Functionally, catalyzes the formation of the isocyclic ring in chlorophyll biosynthesis. Mediates the cyclase reaction, which results in the formation of divinylprotochlorophyllide (Pchlide) characteristic of all chlorophylls from magnesium-protoporphyrin IX 13-monomethyl ester (MgPMME). This chain is Magnesium-protoporphyrin IX monomethyl ester [oxidative] cyclase, found in Gloeobacter violaceus (strain ATCC 29082 / PCC 7421).